Here is an 812-residue protein sequence, read N- to C-terminus: MKEFPKNYNFIESEKKWQKIWQEKQIYAYDENIAKDETFVVDTPPPTVSGQLHIGHVYSYTQTDFIVRFQRMMGKNIFYPMGFDDNGLPTERLVEKQRQVKAYNMGREELINICNEVVASEEEKFRSLFNQIALSVDWNLEYQTISPLSRKISQMSFLDLVKKGEVYRNNQPILWDPVDGTALAQADIEDKEKTSFMNYITFKTEANDEFTIATTRPELLPACVAVFYHPDDKRYQHLAGKFAVTPLFNVKVPLLADPLVQQDKGTGLVMCCTFGDQTDITWWKTHNLPLNTIITKKGTIDFPHEIGIDGLKIKEARAKIIDILKEQELFVKQEEITQTVKCAERSGAPLEVLTVPQWFVKTISHKDELLKRANELNWHPKNMKIRLDNWINAISWDWCISRQRYFGVPFPVWYSKRIGEEGKILYADISQLPVDPLKDLPIGYSKYEVEPDLDVMDTWATSSVSPQLSTWGISDEFAVNKDRHGKLFPMDLRPQAHEIIRTWAFYTILKAHLHQNTLPWKNIMVSGWCLAEDRSKMSKSKGNVLVPEKLLEQYGSDVIRYWSANSKLGADTAYSEDVMKNGKRLVNKLWNAAKFVSQHFDKLSDEDKKTNLIDVKEKITHEFDQWIINKLVELVNNATNELQNYEYANAMHLTEKFFWSVFCDNYLEISKTRAYDEENKNPSGQYSSVLTLYHVMQTLLKLFAPFMPHITEELYQILYSENSIHIKGNWINYGNLNYKIDAKQPERLLEILDHVRKFKAEKNLSIKAEVQLLEVSGIELSKELTSDLKNVTSAKEVKFKPTNDEIKVSILT.

A 'HIGH' region motif is present at residues 46-56 (PTVSGQLHIGH). A 'KMSKS' region motif is present at residues 536 to 540 (KMSKS). Residue K539 participates in ATP binding.

The protein belongs to the class-I aminoacyl-tRNA synthetase family. ValS type 2 subfamily. Monomer.

Its subcellular location is the cytoplasm. It carries out the reaction tRNA(Val) + L-valine + ATP = L-valyl-tRNA(Val) + AMP + diphosphate. In terms of biological role, catalyzes the attachment of valine to tRNA(Val). As ValRS can inadvertently accommodate and process structurally similar amino acids such as threonine, to avoid such errors, it has a 'posttransfer' editing activity that hydrolyzes mischarged Thr-tRNA(Val) in a tRNA-dependent manner. This is Valine--tRNA ligase from Rickettsia bellii (strain OSU 85-389).